Here is a 507-residue protein sequence, read N- to C-terminus: Cytochrome P450 71A4 (507 aa).

A helical membrane pass occupies residues 3 to 23; it reads VPCLWYSLLILLLLFIFLLIH. Cys448 contributes to the heme binding site.

Belongs to the cytochrome P450 family. The cofactor is heme.

The protein localises to the membrane. Functionally, may have a role in maturation, such as during flavor formation or other metabolite production specific to aging tissues. In Solanum melongena (Eggplant), this protein is Cytochrome P450 71A4 (CYP71A4).